The primary structure comprises 956 residues: uncharacterized protein (956 aa).

Positions 918–942 (NSINEAIEKLNEAADAYQAIIDQQK) form a coiled coil.

This is an uncharacterized protein from Acanthamoeba polyphaga (Amoeba).